We begin with the raw amino-acid sequence, 66 residues long: Large ribosomal subunit protein uL29 (66 aa).

Belongs to the universal ribosomal protein uL29 family.

In Borrelia hermsii (strain HS1 / DAH), this protein is Large ribosomal subunit protein uL29.